Reading from the N-terminus, the 504-residue chain is Cobyric acid synthase (504 aa).

The 197-residue stretch at 258-454 (EIEIAIIKLP…LHGIFENDEW (197 aa)) folds into the GATase cobBQ-type domain. The active-site Nucleophile is the C339. The active site involves H446.

Belongs to the CobB/CobQ family. CobQ subfamily.

Its pathway is cofactor biosynthesis; adenosylcobalamin biosynthesis. In terms of biological role, catalyzes amidations at positions B, D, E, and G on adenosylcobyrinic A,C-diamide. NH(2) groups are provided by glutamine, and one molecule of ATP is hydrogenolyzed for each amidation. The chain is Cobyric acid synthase from Prochlorococcus marinus (strain NATL2A).